We begin with the raw amino-acid sequence, 235 residues long: tRNA (adenine(37)-N6)-methyltransferase (235 aa).

A TsaA-like domain is found at 6-147 (FEQIGVIRSP…YLPFAESLPD (142 aa)). Residues 23 to 25 (PRQ), 64 to 65 (HQ), R92, and 127 to 130 (VDGT) each bind S-adenosyl-L-methionine.

It belongs to the tRNA methyltransferase O family. As to quaternary structure, homodimer.

It carries out the reaction N(6)-L-threonylcarbamoyladenosine(37) in tRNA + S-adenosyl-L-methionine = N(6)-methyl,N(6)-L-threonylcarbamoyladenosine(37) in tRNA + S-adenosyl-L-homocysteine + H(+). Functionally, S-adenosyl-L-methionine-dependent methyltransferase responsible for the addition of the methyl group in the formation of N6-methyl-N6-threonylcarbamoyladenosine at position 37 (m(6)t(6)A37) of the tRNA anticodon loop of tRNA(Thr)(GGU) that read codons starting with adenosine. The methyl group of m(6)t(6)A37 appears to slightly improve the efficiency of the tRNA decoding ability. The sequence is that of tRNA (adenine(37)-N6)-methyltransferase from Escherichia coli (strain K12).